The following is a 281-amino-acid chain: 2-dehydro-3-deoxyphosphooctonate aldolase 1 (281 aa).

The protein belongs to the KdsA family.

The protein resides in the cytoplasm. It catalyses the reaction D-arabinose 5-phosphate + phosphoenolpyruvate + H2O = 3-deoxy-alpha-D-manno-2-octulosonate-8-phosphate + phosphate. It participates in carbohydrate biosynthesis; 3-deoxy-D-manno-octulosonate biosynthesis; 3-deoxy-D-manno-octulosonate from D-ribulose 5-phosphate: step 2/3. Its pathway is bacterial outer membrane biogenesis; lipopolysaccharide biosynthesis. This chain is 2-dehydro-3-deoxyphosphooctonate aldolase 1 (kdsA1), found in Pseudomonas putida (strain ATCC 47054 / DSM 6125 / CFBP 8728 / NCIMB 11950 / KT2440).